The primary structure comprises 547 residues: Chaperonin GroEL (547 aa).

Residues threonine 30–proline 33, lysine 51, aspartate 87–threonine 91, glycine 415, and aspartate 496 contribute to the ATP site. The disordered stretch occupies residues lysine 527–phenylalanine 547. Residues proline 534–phenylalanine 547 are compositionally biased toward gly residues.

It belongs to the chaperonin (HSP60) family. Forms a cylinder of 14 subunits composed of two heptameric rings stacked back-to-back. Interacts with the co-chaperonin GroES.

It is found in the cytoplasm. It carries out the reaction ATP + H2O + a folded polypeptide = ADP + phosphate + an unfolded polypeptide.. Functionally, together with its co-chaperonin GroES, plays an essential role in assisting protein folding. The GroEL-GroES system forms a nano-cage that allows encapsulation of the non-native substrate proteins and provides a physical environment optimized to promote and accelerate protein folding. This is Chaperonin GroEL from Methylocella silvestris (strain DSM 15510 / CIP 108128 / LMG 27833 / NCIMB 13906 / BL2).